Reading from the N-terminus, the 469-residue chain is A-type ATP synthase subunit B (469 aa).

The protein belongs to the ATPase alpha/beta chains family. As to quaternary structure, has multiple subunits with at least A(3), B(3), C, D, E, F, H, I and proteolipid K(x).

Its subcellular location is the cell membrane. Its function is as follows. Component of the A-type ATP synthase that produces ATP from ADP in the presence of a proton gradient across the membrane. The B chain is a regulatory subunit. In Staphylothermus marinus (strain ATCC 43588 / DSM 3639 / JCM 9404 / F1), this protein is A-type ATP synthase subunit B.